The sequence spans 374 residues: uncharacterized protein (374 aa).

A divalent metal cation-binding residues include D158, H160, D190, N221, H312, and H314.

This sequence belongs to the metallophosphoesterase superfamily. It depends on a divalent metal cation as a cofactor.

This is an uncharacterized protein from Campylobacter jejuni subsp. jejuni serotype O:2 (strain ATCC 700819 / NCTC 11168).